The following is a 349-amino-acid chain: Protein RecA (349 aa).

65-72 is a binding site for ATP; the sequence is GPESSGKT.

It belongs to the RecA family.

The protein localises to the cytoplasm. Its function is as follows. Can catalyze the hydrolysis of ATP in the presence of single-stranded DNA, the ATP-dependent uptake of single-stranded DNA by duplex DNA, and the ATP-dependent hybridization of homologous single-stranded DNAs. It interacts with LexA causing its activation and leading to its autocatalytic cleavage. This chain is Protein RecA, found in Azotobacter vinelandii (strain DJ / ATCC BAA-1303).